The chain runs to 358 residues: Alanine racemase (358 aa).

K34 serves as the catalytic Proton acceptor; specific for D-alanine. K34 is subject to N6-(pyridoxal phosphate)lysine. Residue R129 participates in substrate binding. Residue Y254 is the Proton acceptor; specific for L-alanine of the active site. M302 is a substrate binding site.

It belongs to the alanine racemase family. Pyridoxal 5'-phosphate is required as a cofactor.

It carries out the reaction L-alanine = D-alanine. It functions in the pathway amino-acid biosynthesis; D-alanine biosynthesis; D-alanine from L-alanine: step 1/1. Its function is as follows. Catalyzes the interconversion of L-alanine and D-alanine. May also act on other amino acids. This Vibrio parahaemolyticus serotype O3:K6 (strain RIMD 2210633) protein is Alanine racemase (alr).